Reading from the N-terminus, the 261-residue chain is Synaptophysin-like protein 1 (261 aa).

Residues 1–33 (MASKANMVRQRFSRLSQRMSAFQINLNPLKEPL) lie on the Cytoplasmic side of the membrane. The MARVEL domain maps to 28–239 (PLKEPLGFIK…NAWFVYKETS (212 aa)). Residues 34–54 (GFIKILEWFASIFAFATCGGF) form a helical membrane-spanning segment. At 55–117 (KGKTEIQVNC…LIGDYSSSAQ (63 aa)) the chain is on the vesicular side. N-linked (GlcNAc...) asparagine glycans are attached at residues Asn72 and Asn95. The helical transmembrane segment at 118–138 (FYVTFAVFVFLYCIAALLLYV) threads the bilayer. Topologically, residues 139-151 (GYTNLYRDSRKLP) are cytoplasmic. A helical transmembrane segment spans residues 152–172 (MIDFIVTLVATFLWLVSSSAW). Over 173–214 (AKALTDIKVATGHRIVEELEICNPESGVSCYFVSVTSMGSLN) the chain is Vesicular. A glycan (N-linked (GlcNAc...) asparagine) is linked at Asn214. Residues 215-235 (VSVIFGFLNMILWGGNAWFVY) form a helical membrane-spanning segment. The Cytoplasmic segment spans residues 236 to 261 (KETSLHSPSNTSASHSQGGGPPTSGM). Polar residues predominate over residues 241–251 (HSPSNTSASHS). The segment at 241–261 (HSPSNTSASHSQGGGPPTSGM) is disordered. The span at 252–261 (QGGGPPTSGM) shows a compositional bias: gly residues.

This sequence belongs to the synaptophysin/synaptobrevin family. In terms of tissue distribution, ubiquitously expressed.

It localises to the cytoplasmic vesicle membrane. The protein resides in the melanosome. This Mus musculus (Mouse) protein is Synaptophysin-like protein 1 (Sypl1).